The sequence spans 448 residues: Asparagine--tRNA ligase (448 aa).

It belongs to the class-II aminoacyl-tRNA synthetase family. As to quaternary structure, homodimer.

Its subcellular location is the cytoplasm. It carries out the reaction tRNA(Asn) + L-asparagine + ATP = L-asparaginyl-tRNA(Asn) + AMP + diphosphate + H(+). The sequence is that of Asparagine--tRNA ligase from Streptococcus thermophilus (strain ATCC BAA-250 / LMG 18311).